Consider the following 315-residue polypeptide: Methionyl-tRNA formyltransferase (315 aa).

113 to 116 contributes to the (6S)-5,6,7,8-tetrahydrofolate binding site; it reads SLLP.

This sequence belongs to the Fmt family.

The catalysed reaction is L-methionyl-tRNA(fMet) + (6R)-10-formyltetrahydrofolate = N-formyl-L-methionyl-tRNA(fMet) + (6S)-5,6,7,8-tetrahydrofolate + H(+). Attaches a formyl group to the free amino group of methionyl-tRNA(fMet). The formyl group appears to play a dual role in the initiator identity of N-formylmethionyl-tRNA by promoting its recognition by IF2 and preventing the misappropriation of this tRNA by the elongation apparatus. The polypeptide is Methionyl-tRNA formyltransferase (Photorhabdus laumondii subsp. laumondii (strain DSM 15139 / CIP 105565 / TT01) (Photorhabdus luminescens subsp. laumondii)).